Consider the following 216-residue polypeptide: Alanyl-tRNA editing protein AlaX-M (216 aa).

Residues His99, His103, and Cys182 each contribute to the Zn(2+) site.

This sequence belongs to the class-II aminoacyl-tRNA synthetase family. Editing domain AlaX-M subfamily. As to quaternary structure, monomer. It depends on Zn(2+) as a cofactor.

The protein localises to the cytoplasm. In terms of biological role, functions in trans to edit the amino acid moiety from mischarged charged Gly-tRNA(Ala) and Ser-tRNA(Ala). The chain is Alanyl-tRNA editing protein AlaX-M (alaXM) from Pyrococcus horikoshii (strain ATCC 700860 / DSM 12428 / JCM 9974 / NBRC 100139 / OT-3).